A 277-amino-acid polypeptide reads, in one-letter code: Translation initiation factor 2 subunit alpha (277 aa).

The region spanning 22-93 (GEIVVGTVQE…KRGQVDVSLK (72 aa)) is the S1 motif domain.

The protein belongs to the eIF-2-alpha family. As to quaternary structure, heterotrimer composed of an alpha, a beta and a gamma chain.

EIF-2 functions in the early steps of protein synthesis by forming a ternary complex with GTP and initiator tRNA. The protein is Translation initiation factor 2 subunit alpha (eif2a) of Aeropyrum pernix (strain ATCC 700893 / DSM 11879 / JCM 9820 / NBRC 100138 / K1).